A 473-amino-acid polypeptide reads, in one-letter code: MEPFMGKNFLLKNETAVSLYHNYAKDMPIIDYHCHLSPKEIYENKTFQNITEAWLYGDHYKWRIMRANGIEETYITGDAPDEEKFMAWAKTVPMAIGNPLYNWTHLELQRFFGIYEILNEKSGSAIWKQTNKLLKGEGFGARDLIVKSNVKVVCTTDDPVDSLEYHLLLKEDKDFPVSVLPGFRPDKGLEINREGFPEWVQALEDAAAISITTYDEFLKALEKRVRFFHSAGGRVSDHAIDTMVFAETTKEEAGRIFSDRLQGTEVSCEDEKKFKTYTLQFLCGLYAELDWAMQFHINALRNTNTKMMKRLGPDTGYDSMNDEEIAKPLYKLLNSVEMKNQLPKTILYSLNPNDNYVIASMINSFQDGITPGKIQFGTAWWFNDTKDGMLDQMKALSNVGLFSRFIGMLTDSRSFLSYTRHEYFRRIVCNLIGEWVENGEVPRDMELLGSIVQGICYDNAKHYFQFQEEKANV.

This sequence belongs to the metallo-dependent hydrolases superfamily. Uronate isomerase family.

It catalyses the reaction D-glucuronate = D-fructuronate. The catalysed reaction is aldehydo-D-galacturonate = keto-D-tagaturonate. It functions in the pathway carbohydrate metabolism; pentose and glucuronate interconversion. The chain is Uronate isomerase (uxaC) from Bacillus subtilis (strain 168).